Here is a 423-residue protein sequence, read N- to C-terminus: Large ribosomal subunit protein mL37 (423 aa).

The transit peptide at 1 to 29 directs the protein to the mitochondrion; that stretch reads MALASGPALRALAGSGRLGLGGYGTPKRG.

This sequence belongs to the mitochondrion-specific ribosomal protein mL37 family. As to quaternary structure, component of the mitochondrial ribosome large subunit (39S) which comprises a 16S rRNA and about 50 distinct proteins.

Its subcellular location is the mitochondrion. This is Large ribosomal subunit protein mL37 (Mrpl37) from Mus musculus (Mouse).